We begin with the raw amino-acid sequence, 136 residues long: NHL-repeat-containing protein 4 (136 aa).

2 NHL repeats span residues 48–91 (QPLG…FPRV) and 93–132 (PPIC…YQYL).

The chain is NHL-repeat-containing protein 4 (Nhlrc4) from Mus musculus (Mouse).